Here is a 638-residue protein sequence, read N- to C-terminus: Chaperone protein DnaK (638 aa).

Phosphothreonine; by autocatalysis is present on Thr-198. Disordered stretches follow at residues 539 to 559 and 602 to 638; these read DGLA…LASD and QAKA…DDKK. Residues 611 to 623 show a composition bias toward basic and acidic residues; the sequence is GQAHDAGQEKPAD. Residues 624–638 show a composition bias toward acidic residues; it reads DVVDAEFEEVKDDKK.

The protein belongs to the heat shock protein 70 family.

Acts as a chaperone. This Shewanella frigidimarina (strain NCIMB 400) protein is Chaperone protein DnaK.